The following is a 576-amino-acid chain: Alpha-1,3-arabinosyltransferase XAT3 (576 aa).

The Cytoplasmic segment spans residues 1-19 (MKAGERPKLVRGVRQESRR). A helical; Signal-anchor for type II membrane protein membrane pass occupies residues 20 to 40 (FRLLVIVVGFFLVSLTFVFVS). Over 41–576 (KPDAILFSLN…LLEALDNLNP (536 aa)) the chain is Lumenal. A disordered region spans residues 64–171 (IQQKVNEPSG…KHKVTLPTVS (108 aa)). Composition is skewed to basic and acidic residues over residues 73–98 (GESR…DAKP), 126–138 (THNK…KSHQ), and 147–163 (GESK…EQKH). N-linked (GlcNAc...) asparagine glycosylation is found at Asn172, Asn375, and Asn443.

It belongs to the glycosyltransferase 61 family.

It is found in the golgi apparatus membrane. Its pathway is glycan metabolism. Glycosyltransferase involved in the arabinosylation of xylan, the major hemicellulose (non-cellulosic component) of primary and secondary walls of angiosperms. Possesses alpha-1,3-arabinosyltransferase activity, transferring an arabinofuranose residue to the xylan backbone. This is Alpha-1,3-arabinosyltransferase XAT3 from Oryza sativa subsp. japonica (Rice).